We begin with the raw amino-acid sequence, 525 residues long: MTEQIKVSEVSSILRQQLEGIHTSIKLEEVGTVLQVSDGVARIYGLDNAEANELLQFDNGMEAIVMNLEEDNVGAVLLGPTDQIKEGDTVKRTGRIASIDVSEGMIGRVIDPLGNPIDGKGEILGETCEMPLERKAPGVIFRQPVNEPLQTGIKAVDAMIPIGRGQRELIIGDRQTGKTSIAIDTIINQRSNYEAGNPVYCIYVAIGQKGSTVAALVNTLQEKGAMDYTIVVSATASDPAAMQYFAPFAGAAIGEYFRDSGRHALVVYDDLSKQAVAYREVSLILRRPSGREAYPGDIFYLHSRLLERAAKIINQPEVAREMNDLPESMRDKVKGGGSLTALPIIETQAGDVSAYIPTNVISITDGQIFLETDLFNQGNRPAINVGISVSRVGGNAQLKAMKKVAGTLKIDQAQFRELESFSKFGGEMDAVTAFTIDKGQKNTQLLIQPQYSPMPVEEQISILYCGTQGLLKEVPLDKVHEFEARFLQELRTSHQRDVLDVLKTGVINDEIRGILEKTAKELWVH.

172 to 179 contributes to the ATP binding site; it reads GDRQTGKT.

It belongs to the ATPase alpha/beta chains family. F-type ATPases have 2 components, CF(1) - the catalytic core - and CF(0) - the membrane proton channel. CF(1) has five subunits: alpha(3), beta(3), gamma(1), delta(1), epsilon(1). CF(0) has three main subunits: a(1), b(2) and c(9-12). The alpha and beta chains form an alternating ring which encloses part of the gamma chain. CF(1) is attached to CF(0) by a central stalk formed by the gamma and epsilon chains, while a peripheral stalk is formed by the delta and b chains.

The protein localises to the cell inner membrane. It carries out the reaction ATP + H2O + 4 H(+)(in) = ADP + phosphate + 5 H(+)(out). Its function is as follows. Produces ATP from ADP in the presence of a proton gradient across the membrane. The alpha chain is a regulatory subunit. The protein is ATP synthase subunit alpha of Parabacteroides distasonis (strain ATCC 8503 / DSM 20701 / CIP 104284 / JCM 5825 / NCTC 11152).